The following is a 234-amino-acid chain: MSTHIEAQQGDIAETVLLPGDPLRAKYIAETFLTDVHRYNTIRNAFGYTGYYKGQAISVQASGMGIPSISIYANELIQFYGVKRLIRVGTCGGLGTDVHVRDVMIAQSASTDSAIIQNTFGAGLYYAPTADFKLLMKAYQAAQQAQIAVKVGNILSEDRFYNDEIDRQKLIQYGVLGSEMEAAALYMLAAKFNVQALAVLTISNHIITGEETSAEEREKSFNEMITVALEAGIA.

H4 is a binding site for a purine D-ribonucleoside. Phosphate-binding positions include G20, R24, R43, and 87–90 (RVGT). Residues 179-181 (EME) and 203-204 (SN) contribute to the a purine D-ribonucleoside site.

The protein belongs to the PNP/UDP phosphorylase family. Homohexamer; trimer of homodimers.

The catalysed reaction is a purine D-ribonucleoside + phosphate = a purine nucleobase + alpha-D-ribose 1-phosphate. It carries out the reaction a purine 2'-deoxy-D-ribonucleoside + phosphate = a purine nucleobase + 2-deoxy-alpha-D-ribose 1-phosphate. Its function is as follows. Catalyzes the reversible phosphorolytic breakdown of the N-glycosidic bond in the beta-(deoxy)ribonucleoside molecules, with the formation of the corresponding free purine bases and pentose-1-phosphate. The chain is Purine nucleoside phosphorylase DeoD-type from Latilactobacillus sakei subsp. sakei (strain 23K) (Lactobacillus sakei subsp. sakei).